A 357-amino-acid polypeptide reads, in one-letter code: Probable butyrate kinase 1 (357 aa).

It belongs to the acetokinase family.

The protein resides in the cytoplasm. It carries out the reaction butanoate + ATP = butanoyl phosphate + ADP. This Caldanaerobacter subterraneus subsp. tengcongensis (strain DSM 15242 / JCM 11007 / NBRC 100824 / MB4) (Thermoanaerobacter tengcongensis) protein is Probable butyrate kinase 1.